A 203-amino-acid chain; its full sequence is Putative archaetidylserine decarboxylase proenzyme (203 aa).

Ser171 (schiff-base intermediate with substrate; via pyruvic acid) is an active-site residue. Residue Ser171 is modified to Pyruvic acid (Ser); by autocatalysis.

It belongs to the phosphatidylserine decarboxylase family. PSD-A subfamily. As to quaternary structure, heterodimer of a large membrane-associated beta subunit and a small pyruvoyl-containing alpha subunit. Requires pyruvate as cofactor. In terms of processing, is synthesized initially as an inactive proenzyme. Formation of the active enzyme involves a self-maturation process in which the active site pyruvoyl group is generated from an internal serine residue via an autocatalytic post-translational modification. Two non-identical subunits are generated from the proenzyme in this reaction, and the pyruvate is formed at the N-terminus of the alpha chain, which is derived from the carboxyl end of the proenzyme. The post-translation cleavage follows an unusual pathway, termed non-hydrolytic serinolysis, in which the side chain hydroxyl group of the serine supplies its oxygen atom to form the C-terminus of the beta chain, while the remainder of the serine residue undergoes an oxidative deamination to produce ammonia and the pyruvoyl prosthetic group on the alpha chain.

It localises to the cell membrane. It carries out the reaction archaetidylserine + H(+) = archaetidylethanolamine + CO2. Its function is as follows. Catalyzes the formation of archaetidylethanolamine (PtdEtn) from archaetidylserine (PtdSer). The protein is Putative archaetidylserine decarboxylase proenzyme of Methanosarcina barkeri (strain Fusaro / DSM 804).